The primary structure comprises 348 residues: MAATLGPLGSWQQWRRCLLARDGSRMLLLLLLLGSGQGPQQVGAGQTFEYLKREHSLSKPYQGVGTGSSSLWNLMGNAMVMTQYIRLTPDMQSKQGALWNRVPCFLRDWELQVHFKIHGQGKKNLHGDGLAIWYTKDRMQPGPVFGNMDKFVGLGVFVDTYPNEEKQQERVFPYISAMVNNGSLSYDHERDGRPTELGGCTAIVRNLHYDTFLVIRYVKRHLTIMMDIDGKHEWRDCIEVPGVRLPRGYYFGTSSITGDLSDNHDVISLKLFELTVERTPEEEKLHRDVFLPSVDNMKLPEVTAPLPPLSGLALFHIVFFSLVIFVFAIVIGIILYNKWQEQSRKRFY.

The first 38 residues, Met1–Gly38, serve as a signal peptide directing secretion. Over Pro39 to Ala313 the chain is Lumenal. The 226-residue stretch at Glu49–Leu274 folds into the L-type lectin-like domain. Ser93 and Asp128 together coordinate a carbohydrate. Ca(2+) contacts are provided by Asp159, Tyr161, and Asn163. Tyr161–Asn163 provides a ligand contact to a carbohydrate. N-linked (GlcNAc...) asparagine glycosylation is present at Asn181. His188 contributes to the a carbohydrate binding site. Position 191 (Asp191) interacts with Ca(2+). A disulfide bond links Cys200 and Cys237. Gly258–Leu260 is a binding site for a carbohydrate. Residues Leu314–Ile334 form a helical membrane-spanning segment. The Cytoplasmic segment spans residues Leu335–Tyr348. The Endoplasmic reticulum retention signal signature appears at Arg344–Arg346.

The protein resides in the endoplasmic reticulum membrane. It localises to the golgi apparatus membrane. May be involved in the regulation of export from the endoplasmic reticulum of a subset of glycoproteins. May function as a regulator of ERGIC-53. The sequence is that of VIP36-like protein (LMAN2L) from Pongo abelii (Sumatran orangutan).